The following is a 124-amino-acid chain: Small ribosomal subunit protein uS12 (124 aa).

The disordered stretch occupies residues 1-25; the sequence is MATINQLVRKPRQASTYKSASPALD.

It belongs to the universal ribosomal protein uS12 family. Part of the 30S ribosomal subunit. Contacts proteins S8 and S17. May interact with IF1 in the 30S initiation complex.

In terms of biological role, with S4 and S5 plays an important role in translational accuracy. Its function is as follows. Interacts with and stabilizes bases of the 16S rRNA that are involved in tRNA selection in the A site and with the mRNA backbone. Located at the interface of the 30S and 50S subunits, it traverses the body of the 30S subunit contacting proteins on the other side and probably holding the rRNA structure together. The combined cluster of proteins S8, S12 and S17 appears to hold together the shoulder and platform of the 30S subunit. The sequence is that of Small ribosomal subunit protein uS12 from Xylella fastidiosa (strain 9a5c).